The following is a 418-amino-acid chain: Tyrosine--tRNA ligase 1 (418 aa).

L-tyrosine is bound at residue Y34. A 'HIGH' region motif is present at residues 39 to 48; that stretch reads PTADSLHIGH. Positions 169 and 173 each coordinate L-tyrosine. A 'KMSKS' region motif is present at residues 230 to 234; that stretch reads KFGKT. K233 is a binding site for ATP. One can recognise an S4 RNA-binding domain in the interval 352–418; the sequence is TVLIDLLVES…GKKKYFLIRY (67 aa).

This sequence belongs to the class-I aminoacyl-tRNA synthetase family. TyrS type 1 subfamily. As to quaternary structure, homodimer.

Its subcellular location is the cytoplasm. It catalyses the reaction tRNA(Tyr) + L-tyrosine + ATP = L-tyrosyl-tRNA(Tyr) + AMP + diphosphate + H(+). In terms of biological role, catalyzes the attachment of tyrosine to tRNA(Tyr) in a two-step reaction: tyrosine is first activated by ATP to form Tyr-AMP and then transferred to the acceptor end of tRNA(Tyr). The protein is Tyrosine--tRNA ligase 1 of Bacillus cereus (strain ATCC 10987 / NRS 248).